We begin with the raw amino-acid sequence, 312 residues long: Phosphate system positive regulatory protein PHO4 (312 aa).

Positions 1–31 (MGRTTSEGIHGFVDDLEPKSSILDKVGDFIT) are interaction with PHO80. Residues 35–71 (KRHDGREDFNEQNDELNSQENHNSSENGNENENEQDS) form a disordered region. A compositionally biased stretch (low complexity) spans 49-62 (ELNSQENHNSSENG). Positions 75–83 (DDLDRAFEL) match the 9aaTAD motif. The tract at residues 75 to 99 (DDLDRAFELVEGMDMDWMMPSHAHH) is transcription activation domain. Phosphoserine; by PHO85 occurs at positions 100, 114, 128, and 152. Polar residues-rich tracts occupy residues 138–154 (TTSA…SSPY) and 196–210 (PSNS…TAKT). The disordered stretch occupies residues 138 to 259 (TTSANKVTKN…DKRESHKHAE (122 aa)). Positions 140–166 (SANKVTKNKSNSSPYLNKRRGKPGPDS) match the Nuclear localization signal motif. The tract at residues 156 to 200 (NKRRGKPGPDSATSLFELPDSVIPTPKPKPKPKQYPKVILPSNST) is interaction with PHO80. The interval 201–218 (RRVSPVTAKTSSSAEGVV) is interaction with PHO2. The segment at 203-227 (VSPVTAKTSSSAEGVVVASESPVIA) is involved in oligomerization. A Phosphoserine modification is found at Ser-204. The segment covering 211 to 235 (SSSAEGVVVASESPVIAPHGSSHSR) has biased composition (low complexity). Phosphoserine; by PHO85 is present on Ser-223. Ser-242 and Ser-243 each carry phosphoserine. The span at 248-259 (DDDKRESHKHAE) shows a compositional bias: basic and acidic residues. The bHLH domain maps to 250–306 (DKRESHKHAEQARRNRLAVALHELASLIPAEWKQQNVSAAPSKATTVEAACRYIRHL).

As to quaternary structure, binds DNA as a homodimer. Interacts with transcription factor PHO2 and binds cooperatively to PHO5 UAS. Interacts with the cyclin-CDK PHO80-PHO85 and the CDK inhibitor (CKI) PHO81. Phosphorylated by the cyclin-CDK PHO80-PHO85 at five residues under high-phosphate conditions, preventing PHO4 from activating the structural PHO genes. Phosphorylation of Ser-114 and Ser-128 promotes nuclear export. Phosphorylation of Ser-152 decreases nuclear import. Phosphorylation of Ser-223 decreases the binding affinity for PHO2.

The protein localises to the cytoplasm. It is found in the nucleus. Functionally, transcriptional activator that regulates the expression of repressible phosphatase under phosphate starvation conditions. Binds to the upstream activating sequence (UAS) of several phosphatase encoding PHO genes. Inhibited by the cyclin-CDK PHO80-PHO85 under high-phosphate conditions. The sequence is that of Phosphate system positive regulatory protein PHO4 (PHO4) from Saccharomyces cerevisiae (strain ATCC 204508 / S288c) (Baker's yeast).